Here is a 250-residue protein sequence, read N- to C-terminus: MITLIEIKKSLDEILSKIDGDKKYINEVAKKITPITYKLLYINETKCIRCNLCYKECPVDAIEKAKVKKSAKIIEDKCVKCEICAQTCPVGAIYVIEGRAEIEDSEVHYTIKEKSIPHRKIRLKKYELDENTCIKCGICARFCPTNAIKAVRRKSIEVNLDLCMGCGACAEVCPKKCIKVERELGEVIKTRDIEVDKNLCVGCLVCIEECPINAIDQDGDKVKINKDKCILCGRCVDVCPTNAIKMWEKK.

4Fe-4S ferredoxin-type domains lie at 38–67 (KLLY…KAKV), 69–98 (KSAK…VIEG), 124–153 (KKYE…AVRR), 154–183 (KSIE…VERE), 191–220 (RDIE…QDGD), and 220–249 (DKVK…MWEK). [4Fe-4S] cluster-binding residues include Cys47, Cys50, Cys53, Cys57, Cys78, Cys81, Cys84, Cys88, Cys133, Cys136, Cys139, Cys143, Cys163, Cys166, Cys169, Cys173, Cys200, Cys203, Cys206, Cys210, Cys229, Cys232, Cys235, and Cys239.

This is an uncharacterized protein from Methanocaldococcus jannaschii (strain ATCC 43067 / DSM 2661 / JAL-1 / JCM 10045 / NBRC 100440) (Methanococcus jannaschii).